Reading from the N-terminus, the 98-residue chain is MHGRHVTLKDIVLDLQPPDPVGLHCYEQLVDSSEDEVDEVDGQDSQPLKQHFQIVTCCCGCDSNVRLVVQCTETDIREVQQLLLGTLDIVCPICAPKT.

Residues 1 to 42 (MHGRHVTLKDIVLDLQPPDPVGLHCYEQLVDSSEDEVDEVDG) form an E7 terminal domain region. Positions 23-27 (LHCYE) match the LXCXE motif; interaction with host RB1 and TMEM173/STING motif. Residues 58–94 (CCGCDSNVRLVVQCTETDIREVQQLLLGTLDIVCPIC) fold into a zinc finger. A Nuclear export signal motif is present at residues 76–84 (IREVQQLLL).

Belongs to the papillomaviridae E7 protein family. In terms of assembly, homodimer. Homooligomer. Interacts with host RB1; this interaction induces dissociation of RB1-E2F1 complex thereby disrupting RB1 activity. Interacts with host EP300; this interaction represses EP300 transcriptional activity. Interacts with protein E2; this interaction inhibits E7 oncogenic activity. Interacts with host TMEM173/STING; this interaction impairs the ability of TMEM173/STING to sense cytosolic DNA and promote the production of type I interferon (IFN-alpha and IFN-beta). Highly phosphorylated.

It localises to the host cytoplasm. It is found in the host nucleus. Plays a role in viral genome replication by driving entry of quiescent cells into the cell cycle. Stimulation of progression from G1 to S phase allows the virus to efficiently use the cellular DNA replicating machinery to achieve viral genome replication. E7 protein has both transforming and trans-activating activities. Induces the disassembly of the E2F1 transcription factor from RB1, with subsequent transcriptional activation of E2F1-regulated S-phase genes. Interferes with host histone deacetylation mediated by HDAC1 and HDAC2, leading to transcription activation. Also plays a role in the inhibition of both antiviral and antiproliferative functions of host interferon alpha. Interaction with host TMEM173/STING impairs the ability of TMEM173/STING to sense cytosolic DNA and promote the production of type I interferon (IFN-alpha and IFN-beta). The sequence is that of Protein E7 from Homo sapiens (Human).